A 216-amino-acid chain; its full sequence is Deoxyribose-phosphate aldolase (216 aa).

D89 serves as the catalytic Proton donor/acceptor. Catalysis depends on K152, which acts as the Schiff-base intermediate with acetaldehyde. K181 functions as the Proton donor/acceptor in the catalytic mechanism.

The protein belongs to the DeoC/FbaB aldolase family. DeoC type 1 subfamily.

The protein resides in the cytoplasm. The catalysed reaction is 2-deoxy-D-ribose 5-phosphate = D-glyceraldehyde 3-phosphate + acetaldehyde. Its pathway is carbohydrate degradation; 2-deoxy-D-ribose 1-phosphate degradation; D-glyceraldehyde 3-phosphate and acetaldehyde from 2-deoxy-alpha-D-ribose 1-phosphate: step 2/2. Catalyzes a reversible aldol reaction between acetaldehyde and D-glyceraldehyde 3-phosphate to generate 2-deoxy-D-ribose 5-phosphate. The polypeptide is Deoxyribose-phosphate aldolase (Clostridium tetani (strain Massachusetts / E88)).